Consider the following 108-residue polypeptide: PTS system cellobiose-specific EIIB component (108 aa).

In terms of domain architecture, PTS EIIB type-3 spans 3–108 (DKVIALACAA…VLAAAENLMN (106 aa)). Cys-10 acts as the Phosphocysteine intermediate in catalysis. Position 10 is a phosphocysteine; by EIIA (Cys-10).

It catalyses the reaction D-cellobiose(out) + N(pros)-phospho-L-histidyl-[protein] = 6-phospho-beta-D-glucosyl-(1-&gt;4)-D-glucose(in) + L-histidyl-[protein]. In terms of biological role, the phosphoenolpyruvate-dependent sugar phosphotransferase system (sugar PTS), a major carbohydrate active transport system, catalyzes the phosphorylation of incoming sugar substrates concomitantly with their translocation across the cell membrane. Involved in cellobiose transport with PtcA and CelB. This system can also transport lactose. The protein is PTS system cellobiose-specific EIIB component of Lactococcus lactis subsp. lactis (strain IL1403) (Streptococcus lactis).